The primary structure comprises 367 residues: UDP-N-acetylglucosamine--N-acetylmuramyl-(pentapeptide) pyrophosphoryl-undecaprenol N-acetylglucosamine transferase (367 aa).

Residues 15-17, Asn127, Arg163, Ser191, Ile249, and Gln294 each bind UDP-N-acetyl-alpha-D-glucosamine; that span reads TGG.

This sequence belongs to the glycosyltransferase 28 family. MurG subfamily.

It is found in the cell inner membrane. It carries out the reaction di-trans,octa-cis-undecaprenyl diphospho-N-acetyl-alpha-D-muramoyl-L-alanyl-D-glutamyl-meso-2,6-diaminopimeloyl-D-alanyl-D-alanine + UDP-N-acetyl-alpha-D-glucosamine = di-trans,octa-cis-undecaprenyl diphospho-[N-acetyl-alpha-D-glucosaminyl-(1-&gt;4)]-N-acetyl-alpha-D-muramoyl-L-alanyl-D-glutamyl-meso-2,6-diaminopimeloyl-D-alanyl-D-alanine + UDP + H(+). Its pathway is cell wall biogenesis; peptidoglycan biosynthesis. Its function is as follows. Cell wall formation. Catalyzes the transfer of a GlcNAc subunit on undecaprenyl-pyrophosphoryl-MurNAc-pentapeptide (lipid intermediate I) to form undecaprenyl-pyrophosphoryl-MurNAc-(pentapeptide)GlcNAc (lipid intermediate II). The sequence is that of UDP-N-acetylglucosamine--N-acetylmuramyl-(pentapeptide) pyrophosphoryl-undecaprenol N-acetylglucosamine transferase from Burkholderia pseudomallei (strain 668).